Consider the following 127-residue polypeptide: Large ribosomal subunit protein bL12 (127 aa).

This sequence belongs to the bacterial ribosomal protein bL12 family. Homodimer. Part of the ribosomal stalk of the 50S ribosomal subunit. Forms a multimeric L10(L12)X complex, where L10 forms an elongated spine to which 2 to 4 L12 dimers bind in a sequential fashion. Binds GTP-bound translation factors.

In terms of biological role, forms part of the ribosomal stalk which helps the ribosome interact with GTP-bound translation factors. Is thus essential for accurate translation. This chain is Large ribosomal subunit protein bL12, found in Desulforapulum autotrophicum (strain ATCC 43914 / DSM 3382 / VKM B-1955 / HRM2) (Desulfobacterium autotrophicum).